Here is a 447-residue protein sequence, read N- to C-terminus: N-succinylarginine dihydrolase (447 aa).

Substrate is bound by residues 19–28, Asn-110, and 137–138; these read AGLSFGNEAS and HR. The active site involves Glu-174. Arg-213 is a binding site for substrate. Residue His-249 is part of the active site. Substrate contacts are provided by Asp-251 and Asn-364. Residue Cys-370 is the Nucleophile of the active site.

It belongs to the succinylarginine dihydrolase family. In terms of assembly, homodimer.

It carries out the reaction N(2)-succinyl-L-arginine + 2 H2O + 2 H(+) = N(2)-succinyl-L-ornithine + 2 NH4(+) + CO2. Its pathway is amino-acid degradation; L-arginine degradation via AST pathway; L-glutamate and succinate from L-arginine: step 2/5. Functionally, catalyzes the hydrolysis of N(2)-succinylarginine into N(2)-succinylornithine, ammonia and CO(2). The protein is N-succinylarginine dihydrolase of Yersinia pseudotuberculosis serotype O:1b (strain IP 31758).